The following is a 647-amino-acid chain: Dihydrolipoyllysine-residue acetyltransferase component of pyruvate dehydrogenase complex (647 aa).

Residues 1–86 (MWRVCARRAQ…LWGSPSRRWY (86 aa)) constitute a mitochondrion transit peptide. The Lipoyl-binding 1 domain maps to 91-167 (HQKVPLPSLS…PVGAIICITV (77 aa)). Ser-100 carries the post-translational modification Phosphoserine. Lys-132 is subject to N6-lipoyllysine. The interval 184-216 (SAAPAPPAAPAPTPAAPAPSPTPSAQAPGSSYP) is disordered. The segment covering 187-205 (PAPPAAPAPTPAAPAPSPT) has biased composition (pro residues). The Lipoyl-binding 2 domain maps to 218 to 294 (HMQVLLPALS…PLGTPLCIIV (77 aa)). At Lys-259 the chain carries N6-lipoyllysine. The segment at 311–352 (VTDLKPPAPPPIPSPAAPVPPAPQPVAPPPSAPRPAAPAGPK) is disordered. Over residues 316-348 (PPAPPPIPSPAAPVPPAPQPVAPPPSAPRPAAP) the composition is skewed to pro residues. Residues 356–393 (FVSPLAKKLAAEKGIDLTQVKGTGPDGRIIKKDIDSFV) enclose the Peripheral subunit-binding (PSBD) domain. Arg-461 contributes to the CoA binding site. Lys-466 is modified (N6-acetyllysine). Residue Lys-473 is modified to N6-succinyllysine. Residue Ser-475 participates in CoA binding. Lys-547 carries the N6-succinyllysine modification. CoA is bound by residues Ser-566, Asn-567, and Gly-591. Active-site residues include His-620 and Asp-624.

This sequence belongs to the 2-oxoacid dehydrogenase family. In terms of assembly, part of the pyruvate dehydrogenase complex (PDHc) that is a multi-enzyme complex composed of multiple copies of three enzymes, pyruvate dehydrogenase (subunits PDH1A and PDHB, E1 component), dihydrolipoamide acetyltransferase (DLAT, E2 component), and dihydrolipoamide dehydrogenase (DLD, E3 component) to which is added an additional protein the E3-binding protein (PDHX, E3BP). In terms of structural architecture, the E2 and E3BP components assemble into a 60meric central core with icosahedral symmetry. The central core is decorated with E1 and E3 proteins. Currently, two alternative models for the E2:E3BP stoichiometry are considered as being either 48:12 (E2(48)-E3BP(12)) or 40:20 (E2(40)-E3BP(20)). Interacts with PDK2 and PDK3. Interacts with SIRT4. Interacts with PDHB. It depends on (R)-lipoate as a cofactor. Post-translationally, delipoylated at Lys-132 and Lys-259 by SIRT4, delipoylation decreases the PHD complex activity.

It localises to the mitochondrion matrix. It catalyses the reaction N(6)-[(R)-dihydrolipoyl]-L-lysyl-[protein] + acetyl-CoA = N(6)-[(R)-S(8)-acetyldihydrolipoyl]-L-lysyl-[protein] + CoA. Its function is as follows. As part of the pyruvate dehydrogenase complex, catalyzes the transfers of an acetyl group to a lipoic acid moiety. The pyruvate dehydrogenase complex, catalyzes the overall conversion of pyruvate to acetyl-CoA and CO(2), and thereby links cytoplasmic glycolysis and the mitochondrial tricarboxylic acid (TCA) cycle. The sequence is that of Dihydrolipoyllysine-residue acetyltransferase component of pyruvate dehydrogenase complex from Bos taurus (Bovine).